A 170-amino-acid polypeptide reads, in one-letter code: MPKPTKGPRLGGSSSHQKALLTNLAASLFEHGRIKTTEPKARALRPYAEKLITHAKKGTLHNRREVLKKLPDKDVVHALFAEIGPFFSDRDGGYTRIIKVEARKGDNAPMAVIELVREKTVTSEADRARRVAAASAKAAQAQEKPAQEEEVEATSDEVAYTSEPDKAAEH.

Residues 134–144 (ASAKAAQAQEK) are compositionally biased toward low complexity. A disordered region spans residues 134–170 (ASAKAAQAQEKPAQEEEVEATSDEVAYTSEPDKAAEH).

It belongs to the bacterial ribosomal protein bL17 family. As to quaternary structure, part of the 50S ribosomal subunit. Contacts protein L32.

The protein is Large ribosomal subunit protein bL17 of Mycobacterium leprae (strain Br4923).